We begin with the raw amino-acid sequence, 181 residues long: Transcription termination/antitermination protein NusG (181 aa).

The KOW domain maps to 130–161; that stretch reads PGELVRVSDGPFADFNGVVEEVDYEKSRLKVS.

The protein belongs to the NusG family. In terms of assembly, monomer. Interacts with the transcription termination factor Rho and with RNA polymerase.

In terms of biological role, participates in transcription elongation, termination and antitermination. In the absence of Rho, increases the rate of transcription elongation by the RNA polymerase (RNAP), probably by partially suppressing pausing. In the presence of Rho, modulates most Rho-dependent termination events by interacting with the RNAP to render the complex more susceptible to the termination activity of Rho. May be required to overcome a kinetic limitation of Rho to function at certain terminators. Also involved in ribosomal RNA transcriptional antitermination. The chain is Transcription termination/antitermination protein NusG from Yersinia pestis.